Here is a 595-residue protein sequence, read N- to C-terminus: Arginine--tRNA ligase (595 aa).

Residues 132–142 (ANPTGPLHVGH) carry the 'HIGH' region motif.

It belongs to the class-I aminoacyl-tRNA synthetase family. Monomer.

It localises to the cytoplasm. The enzyme catalyses tRNA(Arg) + L-arginine + ATP = L-arginyl-tRNA(Arg) + AMP + diphosphate. The protein is Arginine--tRNA ligase of Cupriavidus pinatubonensis (strain JMP 134 / LMG 1197) (Cupriavidus necator (strain JMP 134)).